The chain runs to 352 residues: DNA polymerase IV (352 aa).

The UmuC domain maps to 4 to 185; sequence IIHVDMDCFF…LPLSKIPGVG (182 aa). Mg(2+) contacts are provided by Asp-8 and Asp-103. Glu-104 is a catalytic residue.

The protein belongs to the DNA polymerase type-Y family. As to quaternary structure, monomer. It depends on Mg(2+) as a cofactor.

Its subcellular location is the cytoplasm. The catalysed reaction is DNA(n) + a 2'-deoxyribonucleoside 5'-triphosphate = DNA(n+1) + diphosphate. Functionally, poorly processive, error-prone DNA polymerase involved in untargeted mutagenesis. Copies undamaged DNA at stalled replication forks, which arise in vivo from mismatched or misaligned primer ends. These misaligned primers can be extended by PolIV. Exhibits no 3'-5' exonuclease (proofreading) activity. May be involved in translesional synthesis, in conjunction with the beta clamp from PolIII. This chain is DNA polymerase IV, found in Yersinia pestis bv. Antiqua (strain Antiqua).